Consider the following 109-residue polypeptide: Hainantoxin-XVIII-2 (109 aa).

Residues 1–18 (MKLSIIIIATSLVIAVVA) form the signal peptide. Residues 19–46 (FPSKDSKAIENDKTEQRMEIVVQETARA) constitute a propeptide that is removed on maturation. Cystine bridges form between C47-C62, C59-C108, and C61-C81.

It belongs to the neurotoxin 25 family. F7 subfamily. Expressed by the venom gland.

It is found in the secreted. In terms of biological role, putative ion channel inhibitor. The protein is Hainantoxin-XVIII-2 of Cyriopagopus hainanus (Chinese bird spider).